The chain runs to 98 residues: MFEQNLTSEALTVTTVTSQDQITQKPLRDSVKASLKNYLAQLNGQEVDDLYELVLAEVEQPLLDTIMQYTRGNQTRAATMMGINRGTLRKKLKKYGMN.

The segment at residues 74–93 is a DNA-binding region (H-T-H motif); sequence QTRAATMMGINRGTLRKKLK.

It belongs to the transcriptional regulatory Fis family. Homodimer.

Functionally, activates ribosomal RNA transcription. Plays a direct role in upstream activation of rRNA promoters. The polypeptide is DNA-binding protein Fis (Photobacterium profundum (strain SS9)).